Here is a 765-residue protein sequence, read N- to C-terminus: Lysyl oxidase homolog 2 (765 aa).

The signal sequence occupies residues 1–19; it reads MLVSHVFLLTLSLSVPSLG. 4 consecutive SRCR domains span residues 49-150, 179-293, 317-416, and 426-535; these read VRLA…VQCS, IRPI…VSCT, VRLR…VRCN, and VRLS…VSCV. Cystine bridges form between cysteine 75–cysteine 139, cysteine 88–cysteine 149, cysteine 119–cysteine 129, cysteine 209–cysteine 282, cysteine 222–cysteine 292, cysteine 256–cysteine 266, cysteine 342–cysteine 405, cysteine 355–cysteine 415, and cysteine 386–cysteine 396. Asparagine 279 carries an N-linked (GlcNAc...) asparagine glycan. An N-linked (GlcNAc...) asparagine glycan is attached at asparagine 446. 3 disulfides stabilise this stretch: cysteine 455–cysteine 521, cysteine 468–cysteine 534, and cysteine 502–cysteine 512. Positions 539 to 742 are lysyl-oxidase like; the sequence is PDLVLNAALV…WMYNCHIGGS (204 aa). Residues aspartate 540 and leucine 541 each contribute to the Ca(2+) site. Disulfide bonds link cysteine 564–cysteine 616, cysteine 570–cysteine 686, cysteine 648–cysteine 664, and cysteine 654–cysteine 676. 3 residues coordinate Cu cation: histidine 617, histidine 619, and histidine 621. Asparagine 635 is a glycosylation site (N-linked (GlcNAc...) asparagine). Residues 644–680 constitute a cross-link (lysine tyrosylquinone (Lys-Tyr)); sequence KASFCLEDSECEADIQKQYVCANFGEQGITVGCWDLY. Tyrosine 680 carries the 2',4',5'-topaquinone modification. Ca(2+) is bound by residues glutamate 713, aspartate 715, asparagine 718, and asparagine 719. Cysteines 723 and 737 form a disulfide.

This sequence belongs to the lysyl oxidase family. Cu cation is required as a cofactor. The cofactor is lysine tyrosylquinone residue. The lysine tyrosylquinone cross-link (LTQ) is generated by condensation of the epsilon-amino group of a lysine with a topaquinone produced by oxidation of tyrosine.

The protein resides in the secreted. It localises to the extracellular space. It is found in the extracellular matrix. Its subcellular location is the basement membrane. The protein localises to the nucleus. The protein resides in the chromosome. It localises to the endoplasmic reticulum. It carries out the reaction L-lysyl-[protein] + O2 + H2O = (S)-2-amino-6-oxohexanoyl-[protein] + H2O2 + NH4(+). Functionally, mediates the post-translational oxidative deamination of lysine residues on target proteins leading to the formation of deaminated lysine (allysine). Acts as a transcription corepressor and specifically mediates deamination of trimethylated 'Lys-4' of histone H3 (H3K4me3), a specific tag for epigenetic transcriptional activation. Shows no activity against histone H3 when it is trimethylated on 'Lys-9' (H3K9me3) or 'Lys-27' (H3K27me3) or when 'Lys-4' is monomethylated (H3K4me1) or dimethylated (H3K4me2). Also mediates deamination of methylated TAF10, a member of the transcription factor IID (TFIID) complex, which induces release of TAF10 from promoters, leading to inhibition of TFIID-dependent transcription. LOXL2-mediated deamination of TAF10 results in transcriptional repression of genes required for embryonic stem cell pluripotency. Involved in epithelial to mesenchymal transition (EMT) and participates in repression of E-cadherin, probably by mediating deamination of histone H3. When secreted into the extracellular matrix, promotes cross-linking of extracellular matrix proteins by mediating oxidative deamination of peptidyl lysine residues in precursors to fibrous collagen and elastin. Acts as a regulator of sprouting angiogenesis, probably via collagen IV scaffolding. Acts as a regulator of chondrocyte differentiation, probably by regulating expression of factors that control chondrocyte differentiation. The sequence is that of Lysyl oxidase homolog 2 (loxl2) from Xenopus laevis (African clawed frog).